The chain runs to 1182 residues: Phosphatidylinositol 3-kinase age-1 (1182 aa).

Polar residues predominate over residues 1-16 (MSMGRSPSTTFRSRTG). The tract at residues 1 to 24 (MSMGRSPSTTFRSRTGSHGARDLI) is disordered. The region spanning 74–174 (NEGVADIITM…FPMLFLYQPD (101 aa)) is the PI3K-ABD domain. The PI3K-RBD domain occupies 266-358 (KRKAEINGVC…YRCPGFVVRR (93 aa)). The region spanning 425–577 (LDANLMIRPV…SSYGGRVRMP (153 aa)) is the C2 PI3K-type domain. The PIK helical domain occupies 601–788 (DDYESCIRDP…SLLMEAYLRG (188 aa)). One can recognise a PI3K/PI4K catalytic domain in the interval 853-1168 (IIDKAIVLGS…IYEEAFNGSW (316 aa)). The tract at residues 859–865 (VLGSAKR) is G-loop. The tract at residues 1028 to 1036 (GIKDRHSDN) is catalytic loop. The segment at 1047–1073 (HIDFGHILGHGKTKLGIQRDRQPFILT) is activation loop.

It belongs to the PI3/PI4-kinase family.

It carries out the reaction a 1,2-diacyl-sn-glycero-3-phospho-(1D-myo-inositol) + ATP = a 1,2-diacyl-sn-glycero-3-phospho-(1D-myo-inositol-3-phosphate) + ADP + H(+). In terms of biological role, phosphatidylinositol 3-kinase homolog that regulates longevity and diapause. Promotes cell survival during embryonic development by recruiting akt-1/2 to the plasma membrane through the production of PtdIns(3,4,5)P3. Could function in the development or neuroendocrine signaling of the dauer pathway. Mediates susceptibility to enteropathogenic E.coli infection. May negatively regulate AYI interneuron neurite outgrowth. Plays a role in aversive olfactory learning when an odor is associated with food deprivation. Regulates this process by promoting the nuclear relocalization of egl-4 in AWC olfactory neurons after odor conditioning. In Caenorhabditis elegans, this protein is Phosphatidylinositol 3-kinase age-1.